Reading from the N-terminus, the 325-residue chain is ATP phosphoribosyltransferase (325 aa).

The protein belongs to the ATP phosphoribosyltransferase family. Long subfamily. It depends on Mg(2+) as a cofactor.

It is found in the cytoplasm. The catalysed reaction is 1-(5-phospho-beta-D-ribosyl)-ATP + diphosphate = 5-phospho-alpha-D-ribose 1-diphosphate + ATP. It participates in amino-acid biosynthesis; L-histidine biosynthesis; L-histidine from 5-phospho-alpha-D-ribose 1-diphosphate: step 1/9. Its activity is regulated as follows. Feedback inhibited by histidine. Its function is as follows. Catalyzes the condensation of ATP and 5-phosphoribose 1-diphosphate to form N'-(5'-phosphoribosyl)-ATP (PR-ATP). Has a crucial role in the pathway because the rate of histidine biosynthesis seems to be controlled primarily by regulation of HisG enzymatic activity. The protein is ATP phosphoribosyltransferase of Nitrobacter winogradskyi (strain ATCC 25391 / DSM 10237 / CIP 104748 / NCIMB 11846 / Nb-255).